The following is a 196-amino-acid chain: Peptidyl-tRNA hydrolase (196 aa).

Residue Y18 coordinates tRNA. H23 (proton acceptor) is an active-site residue. Residues F69, N71, and N117 each coordinate tRNA.

The protein belongs to the PTH family. Monomer.

It localises to the cytoplasm. It catalyses the reaction an N-acyl-L-alpha-aminoacyl-tRNA + H2O = an N-acyl-L-amino acid + a tRNA + H(+). Its function is as follows. Hydrolyzes ribosome-free peptidyl-tRNAs (with 1 or more amino acids incorporated), which drop off the ribosome during protein synthesis, or as a result of ribosome stalling. Catalyzes the release of premature peptidyl moieties from peptidyl-tRNA molecules trapped in stalled 50S ribosomal subunits, and thus maintains levels of free tRNAs and 50S ribosomes. This chain is Peptidyl-tRNA hydrolase, found in Vibrio parahaemolyticus serotype O3:K6 (strain RIMD 2210633).